A 27-amino-acid polypeptide reads, in one-letter code: uncharacterized protein (27 aa).

Its subcellular location is the mitochondrion. This is an uncharacterized protein from Emericella nidulans (Aspergillus nidulans).